A 204-amino-acid polypeptide reads, in one-letter code: FMN-dependent NADH:quinone oxidoreductase 1 (204 aa).

FMN contacts are provided by residues S14, S20–S22, and M99–F102.

Belongs to the azoreductase type 1 family. In terms of assembly, homodimer. FMN is required as a cofactor.

The enzyme catalyses 2 a quinone + NADH + H(+) = 2 a 1,4-benzosemiquinone + NAD(+). The catalysed reaction is N,N-dimethyl-1,4-phenylenediamine + anthranilate + 2 NAD(+) = 2-(4-dimethylaminophenyl)diazenylbenzoate + 2 NADH + 2 H(+). In terms of biological role, quinone reductase that provides resistance to thiol-specific stress caused by electrophilic quinones. Its function is as follows. Also exhibits azoreductase activity. Catalyzes the reductive cleavage of the azo bond in aromatic azo compounds to the corresponding amines. This Hahella chejuensis (strain KCTC 2396) protein is FMN-dependent NADH:quinone oxidoreductase 1.